Here is a 371-residue protein sequence, read N- to C-terminus: Surface protein P12p (371 aa).

Residues 1–20 (MHIVSFIIFFFALFFPISIC) form the signal peptide. 6-Cys domains follow at residues 23-168 (INGV…LKKN) and 169-343 (ILYG…FSNQ). 4 disulfide bridges follow: C27–C62, C76–C144, C93–C142, and C173–C245. A glycan (N-linked (GlcNAc...) asparagine) is linked at N184. A disordered region spans residues 202–239 (GNNNNDDDNNDDDNNNDNNNNDNNNNNNNNNNNNNNNN). Residues 206–216 (NDDDNNDDDNN) are compositionally biased toward acidic residues. A compositionally biased stretch (low complexity) spans 217 to 239 (NDNNNNDNNNNNNNNNNNNNNNN). N242 and N246 each carry an N-linked (GlcNAc...) asparagine glycan. 2 cysteine pairs are disulfide-bonded: C260-C323 and C271-C321.

The protein resides in the cell surface. It is found in the cell membrane. This is Surface protein P12p (PFS12P) from Plasmodium falciparum (isolate 3D7).